Reading from the N-terminus, the 504-residue chain is Maturase K (504 aa).

This sequence belongs to the intron maturase 2 family. MatK subfamily.

It localises to the plastid. Its subcellular location is the chloroplast. Its function is as follows. Usually encoded in the trnK tRNA gene intron. Probably assists in splicing its own and other chloroplast group II introns. The polypeptide is Maturase K (Adansonia digitata (Baobab tree)).